Reading from the N-terminus, the 771-residue chain is Heat shock transcription factor (771 aa).

Residues 1 to 70 (MTTNLYAIAG…GIGISKPGLS (70 aa)) form a disordered region. 2 stretches are compositionally biased toward low complexity: residues 11–23 (PSKP…TPSP) and 31–42 (LKSLTSLPTNPL). Over residues 43–62 (NPQGTSTSNALTNQSSSTGI) the composition is skewed to polar residues. Residues 78 to 168 (MKVPAFLNKL…PIELWEFANP (91 aa)) mediate DNA binding. Residues 183-266 (RKNNRLSNSG…PPSHTSAGPL (84 aa)) are disordered. 2 stretches are compositionally biased toward low complexity: residues 189-199 (SNSGVGSSSSL) and 212-233 (SASA…ISQG). Positions 238 to 262 (NHSTSGKYLITDGTTPGSAPPSHTS) are enriched in polar residues. The interval 280–333 (GIAAIRQTQASIATDLRKLQASNEALWRQAYETQEKQRKHEETIDLIVSFLERL) is involved in trimerization. Composition is skewed to basic and acidic residues over residues 350–372 (RGVG…ARFA) and 399–415 (TGEH…DRLV). Disordered regions lie at residues 350-513 (RGVG…SSNA), 590-634 (QALT…GSGT), and 708-771 (SGVG…SGLK). Residues 418 to 448 (GSNSEYSIPSVKRTSSSSHPLSLGQLGSSRF) show a composition bias toward polar residues. 2 stretches are compositionally biased toward low complexity: residues 497–511 (LSPL…PSSS) and 599–620 (HNPS…SASA).

This sequence belongs to the HSF family. In terms of assembly, homotrimer. Homotrimerization increases the affinity of HSF1 to DNA. Interacts with transcriptional coregulator SSA1 on chromatin. Post-translationally, phosphorylated at high temperature.

The protein localises to the nucleus. Its function is as follows. DNA-binding transcription factor that specifically binds heat shock promoter elements (HSE) and activates transcription. Promotes thermotolerance by transiently regulating a subset of genes. Induces expression of STI, SSA1, SSA2, HSP78 and KAR2 during the heat response. The sequence is that of Heat shock transcription factor from Cryptococcus neoformans var. grubii serotype A (strain H99 / ATCC 208821 / CBS 10515 / FGSC 9487) (Filobasidiella neoformans var. grubii).